Consider the following 186-residue polypeptide: Ribosome-recycling factor (186 aa).

This sequence belongs to the RRF family.

It localises to the cytoplasm. In terms of biological role, responsible for the release of ribosomes from messenger RNA at the termination of protein biosynthesis. May increase the efficiency of translation by recycling ribosomes from one round of translation to another. The sequence is that of Ribosome-recycling factor from Ralstonia pickettii (strain 12J).